The chain runs to 278 residues: Tryptophan synthase alpha chain (278 aa).

Residues E50 and D61 each act as proton acceptor in the active site.

It belongs to the TrpA family. Tetramer of two alpha and two beta chains.

It catalyses the reaction (1S,2R)-1-C-(indol-3-yl)glycerol 3-phosphate + L-serine = D-glyceraldehyde 3-phosphate + L-tryptophan + H2O. The protein operates within amino-acid biosynthesis; L-tryptophan biosynthesis; L-tryptophan from chorismate: step 5/5. In terms of biological role, the alpha subunit is responsible for the aldol cleavage of indoleglycerol phosphate to indole and glyceraldehyde 3-phosphate. This chain is Tryptophan synthase alpha chain, found in Rhodopseudomonas palustris (strain TIE-1).